The chain runs to 222 residues: N-acetyltransferase 8F1 (222 aa).

The chain crosses the membrane as a helical span at residues 53 to 73 (LVLVSGSWILAVICIFFLLLL). The N-acetyltransferase domain maps to 69–220 (FLLLLLRLLA…CTIQLKYSFP (152 aa)).

This sequence belongs to the camello family.

It localises to the membrane. In terms of biological role, may play a role in regulation of gastrulation. The chain is N-acetyltransferase 8F1 from Mus musculus (Mouse).